We begin with the raw amino-acid sequence, 218 residues long: Ras-related protein Rab-27B (218 aa).

The residue at position 2 (Thr-2) is an N-acetylthreonine. 16–24 (GDSGVGKTT) serves as a coordination point for GTP. The short motif at 38 to 46 (FITTVGIDF) is the Effector region element. GTP contacts are provided by residues 74-78 (DTAGQ), 133-136 (NKAD), and 163-165 (SAA). Cysteines 123 and 188 form a disulfide. Positions 193-218 (HIPDTVNGSSSGKLDGEKSAEKKCAC) are disordered. Residues 206–218 (LDGEKSAEKKCAC) show a composition bias toward basic and acidic residues. 2 S-geranylgeranyl cysteine lipidation sites follow: Cys-216 and Cys-218. At Cys-218 the chain carries Cysteine methyl ester.

The protein belongs to the small GTPase superfamily. Rab family. As to quaternary structure, interacts with SYTL2, SYTL4, MYRIP and MLPH. Interacts with RPH3A and RPH3A. Interacts (GDP-bound form preferentially) with DENND10. Expressed at an extraordinary high level (0.1% of total protein) in urothelium.

Its subcellular location is the membrane. The protein resides in the late endosome. It catalyses the reaction GTP + H2O = GDP + phosphate + H(+). Regulated by guanine nucleotide exchange factors (GEFs) which promote the exchange of bound GDP for free GTP, GTPase activating proteins (GAPs) which increase the GTP hydrolysis activity, and GDP dissociation inhibitors which inhibit the dissociation of the nucleotide from the GTPase. Activated by GEFs such as DENND10. In terms of biological role, small GTPase which cycles between active GTP-bound and inactive GDP-bound states. In its active state, binds to a variety of effector proteins to regulate homeostasis of late endocytic pathway, including endosomal positioning, maturation and secretion. Plays a role in NTRK2/TRKB axonal anterograde transport by facilitating the association of NTRK2/TRKB with KLC1. May be involved in targeting uroplakins to urothelial apical membranes. This Bos taurus (Bovine) protein is Ras-related protein Rab-27B (RAB27B).